The chain runs to 108 residues: UPF0060 membrane protein YnfA (108 aa).

At 1–5 (MIKTT) the chain is on the periplasmic side. The helical transmembrane segment at 6 to 26 (LLFFATALCEIIGCFLPWLWL) threads the bilayer. The Cytoplasmic portion of the chain corresponds to 27–30 (KRNA). A helical membrane pass occupies residues 31-51 (SIWLLLPAGISLALFVWLLTL). The Periplasmic segment spans residues 52-60 (HPAASGRIY). Residues 61 to 81 (AAYGGVYVCTALMWLRVVDGV) traverse the membrane as a helical segment. Topologically, residues 82–84 (KLT) are cytoplasmic. A helical transmembrane segment spans residues 85–105 (LYDWTGALIALCGMLIIVAGW). Over 106–108 (GRT) the chain is Periplasmic.

Belongs to the UPF0060 family.

The protein resides in the cell inner membrane. The protein is UPF0060 membrane protein YnfA of Shigella dysenteriae serotype 1 (strain Sd197).